The sequence spans 1080 residues: Ubiquitin carboxyl-terminal hydrolase 8 (1080 aa).

An MIT domain is found at 33 to 116; the sequence is TKNYIHSAQK…ESLKLRYEEA (84 aa). A compositionally biased stretch (basic and acidic residues) spans 119-173; it reads RKQLEEKDRREEEQLQQQKRQEMGREDSGAAAKRSVENLLDSKTKTQRINGEKSE. Residues 119 to 176 form a disordered region; it reads RKQLEEKDRREEEQLQQQKRQEMGREDSGAAAKRSVENLLDSKTKTQRINGEKSEGAA. The residue at position 160 (serine 160) is a Phosphoserine. One can recognise a Rhodanese domain in the interval 195–313; that stretch reads KNTSLIIMDA…WLLCYPQFTT (119 aa). The span at 379 to 393 shows a compositional bias: low complexity; the sequence is ALAGPGAAPRAEASP. 3 disordered regions span residues 379-455, 468-605, and 642-710; these read ALAG…TDEE, EKNK…RSEE, and PPEM…KPPC. Serine 392 is subject to Phosphoserine. The short motif at 405-413 is the SH3-binding element; that stretch reads PQVDRTKKP. Residues 417–427 are compositionally biased toward basic and acidic residues; that stretch reads LPEDHRIKSEN. Serine 446 bears the Phosphoserine mark. Basic and acidic residues-rich tracts occupy residues 468–535, 549–577, and 593–605; these read EKNK…RELS, SKSE…KRPA, and AQRE…RSEE. At threonine 569 the chain carries Phosphothreonine. Positions 678–688 are enriched in polar residues; that stretch reads SYSSPDITQAL. Serine 680 and serine 681 each carry phosphoserine. Positions 739 to 1071 constitute a USP domain; it reads TGLRNLGNTC…AAYILFYTSL (333 aa). Cysteine 748 acts as the Nucleophile in catalysis. Threonine 907 carries the phosphothreonine modification. Catalysis depends on histidine 1029, which acts as the Proton acceptor.

It belongs to the peptidase C19 family. In terms of assembly, forms a ternary complex with RNF128 and OTUB1. Interacts (via C-terminal UCH catalytic domain) with OTUB1 isoform 1. Interacts with STAM2 (via SH3 domain). Interacts with DNAJB3, EGFR, EPS15, RASGRF1, RNF41, YWHAE, YWHAG and YWHAZ. Interacts with NBR1, RASGRF1, RNF41 and IST1. Associates with the ESCRT-0 complex and with microtubules. Interacts with BIRC6/bruce and KIF23/MKLP1. Phosphorylation of Ser-680 is essential for interaction with YWHAE and for cytosol localization. Undergoes dephosphorylation at Ser-680 in the M phase. Tyrosine-phosphorylated in its N-terminal half in an EGFR-dependent manner. Post-translationally, ubiquitinated. Inactive form is mostly monoubiquitinated, but polyubiquitination happens too. Ubiquitination is increased in EGF-stimulated cells. Ubiquitination of active form is undetectable, suggesting a possibility that USP8 deubiquitinates itself, thereby regulating its own function. Highly expressed in testis. Expressed at intermediate level in brain.

It localises to the cytoplasm. It is found in the nucleus. Its subcellular location is the endosome membrane. The protein resides in the cell membrane. It catalyses the reaction Thiol-dependent hydrolysis of ester, thioester, amide, peptide and isopeptide bonds formed by the C-terminal Gly of ubiquitin (a 76-residue protein attached to proteins as an intracellular targeting signal).. Functionally, hydrolase that can remove conjugated ubiquitin from proteins and therefore plays an important regulatory role at the level of protein turnover by preventing degradation. Converts both 'Lys-48' an 'Lys-63'-linked ubiquitin chains. Catalytic activity is enhanced in the M phase. Involved in cell proliferation. Required to enter into S phase in response to serum stimulation. May regulate T-cell anergy mediated by RNF128 via the formation of a complex containing RNF128 and OTUB1. Probably regulates the stability of STAM2 and RASGRF1. Regulates endosomal ubiquitin dynamics, cargo sorting, membrane traffic at early endosomes, and maintenance of ESCRT-0 stability. The level of protein ubiquitination on endosomes is essential for maintaining the morphology of the organelle. Deubiquitinates EPS15 and controls tyrosine kinase stability. Removes conjugated ubiquitin from EGFR thus regulating EGFR degradation and downstream MAPK signaling. Involved in acrosome biogenesis through interaction with the spermatid ESCRT-0 complex and microtubules. Deubiquitinates BIRC6/bruce and KIF23/MKLP1. Deubiquitinates BACE1 which inhibits BACE1 lysosomal degradation and modulates BACE-mediated APP cleavage and amyloid-beta formation. The chain is Ubiquitin carboxyl-terminal hydrolase 8 from Mus musculus (Mouse).